Here is a 495-residue protein sequence, read N- to C-terminus: MPMGSLQPLATLYLLGMLVASCLGRLSWYDPDFQARLTRSNSKCQGQLEVYLKDGWHMVCSQSWGRSSKQWEDPSQASKVCQRLNCGVPLSLGPFLVTYTPQSSIICYGQLGSFSNCSHSRNDMCHSLGLTCLEPQKTTPPTTRPPPTTTPEPTAPPRLQLVAQSGGQHCAGVVEFYSGSLGGTISYEAQDKTQDLENFLCNNLQCGSFLKHLPETEAGRAQDPGEPREHQPLPIQWKIQNSSCTSLEHCFRKIKPQKSGRVLALLCSGFQPKVQSRLVGGSSICEGTVEVRQGAQWAALCDSSSARSSLRWEEVCREQQCGSVNSYRVLDAGDPTSRGLFCPHQKLSQCHELWERNSYCKKVFVTCQDPNPAGLAAGTVASIILALVLLVVLLVVCGPLAYKKLVKKFRQKKQRQWIGPTGMNQNMSFHRNHTATVRSHAENPTASHVDNEYSQPPRNSHLSAYPALEGALHRSSMQPDNSSDSDYDLHGAQRL.

Residues 1–24 form the signal peptide; that stretch reads MPMGSLQPLATLYLLGMLVASCLG. Residues 25–372 are Extracellular-facing; sequence RLSWYDPDFQ…VFVTCQDPNP (348 aa). The SRCR 1 domain occupies 35-133; that stretch reads ARLTRSNSKC…MCHSLGLTCL (99 aa). 4 disulfide bridges follow: Cys-44/Cys-86, Cys-60/Cys-125, Cys-81/Cys-132, and Cys-107/Cys-117. Asn-116 is a glycosylation site (N-linked (GlcNAc...) asparagine). Residues 136–155 are disordered; that stretch reads QKTTPPTTRPPPTTTPEPTA. A compositionally biased stretch (pro residues) spans 142–155; the sequence is TTRPPPTTTPEPTA. SRCR domains lie at 159-268 and 276-368; these read LQLV…LLCS and SRLV…VTCQ. 6 cysteine pairs are disulfide-bonded: Cys-201–Cys-267, Cys-244–Cys-250, Cys-285–Cys-321, Cys-301–Cys-360, Cys-316–Cys-367, and Cys-342–Cys-350. N-linked (GlcNAc...) asparagine glycosylation occurs at Asn-241. A helical transmembrane segment spans residues 373–402; that stretch reads AGLAAGTVASIILALVLLVVLLVVCGPLAY. Over 403 to 495 the chain is Cytoplasmic; sequence KKLVKKFRQK…DYDLHGAQRL (93 aa). Disordered regions lie at residues 436–460 and 473–495; these read TVRS…PRNS and HRSS…AQRL. A Phosphoserine modification is found at Ser-439. The residue at position 453 (Tyr-453) is a Phosphotyrosine. A phosphoserine mark is found at Ser-460, Ser-483, and Ser-485. Residues 475–484 show a composition bias toward polar residues; the sequence is SSMQPDNSSD.

In terms of assembly, interacts with CD72/LYB-2. Interacts with PTPN6/SHP-1. Interacts with CBL. Interacts with CD5L. Interacts with CD3Z/CD247. Phosphorylated on serine, threonine and tyrosine residues following TCR stimulation. Phosphorylated by LCK on Tyr-453 and Tyr-487 upon TCR engagement.

The protein resides in the cell membrane. In terms of biological role, lymphoid-specific receptor expressed by all T-cells and in a subset of B-cells known as B1a cells. Plays a role in the regulation of TCR and BCR signaling, thymocyte selection, T-cell effector differentiation and immune tolerance. Acts by interacting with several ligands expressed on B-cells such as CD5L or CD72 and thereby plays an important role in contact-mediated, T-dependent B-cell activation and in the maintenance of regulatory T and B-cell homeostasis. Functions as a negative regulator of TCR signaling during thymocyte development by associating with several signaling proteins including LCK, CD3Z chain, PI3K or CBL. Mechanistically, co-engagement of CD3 with CD5 enhances phosphorylated CBL recruitment leading to increased VAV1 phosphorylation and degradation. Modulates B-cell biology through ERK1/2 activation in a Ca(2+)-dependent pathway via the non-selective Ca(2+) channel TRPC1, leading to IL-10 production. The chain is T-cell surface glycoprotein CD5 (CD5) from Homo sapiens (Human).